Reading from the N-terminus, the 609-residue chain is Membrane-bound O-acyltransferase GUP2 (609 aa).

The N-terminal stretch at 1–18 is a signal peptide; the sequence is MSMLRIWSCIVHFFSVQA. Residues 19–75 are Lumenal-facing; the sequence is LDSRIKPDIEFKRRQRIFINSSKEENGSSSSAVTVTRNPVLSSNSPSPPLWNTWEFR. Residues 76 to 96 form a helical membrane-spanning segment; it reads LYYLAFTVVVPFMIKAALATS. The Cytoplasmic portion of the chain corresponds to 97–133; sequence SESNPNYYKFSGLLAHGWILGRKVDNSDPQYRFFRSN. The helical transmembrane segment at 134–154 threads the bilayer; the sequence is FFLLAILILLQIILKKVFVKF. At 155–169 the chain is on the lumenal side; sequence SKIPKTKFDFACGLV. The helical transmembrane segment at 170-190 threads the bilayer; the sequence is FVCFMYGINSVKLFTHAFIFF. The Cytoplasmic portion of the chain corresponds to 191–200; that stretch reads TLAHSLKRKR. The helical transmembrane segment at 201-221 threads the bilayer; the sequence is LIAAFAIWSYGIFTLFINQKM. Residues 222–324 are Lumenal-facing; that stretch reads KNLPFNNIAI…VAEHHIQDYN (103 aa). The helical transmembrane segment at 325–345 threads the bilayer; that stretch reads FINFIAYITYAPLFLVGPIIT. Residues 346 to 371 lie on the Cytoplasmic side of the membrane; sequence FNDYLYQSENKLPSLTKKNIGFYALK. The chain crosses the membrane as a helical span at residues 372–392; the sequence is VFSSLLLMEIILHYIYVGAIA. Topologically, residues 393–406 are lumenal; that stretch reads RTKAWNNDTPLQQA. A helical transmembrane segment spans residues 407 to 427; that stretch reads MIALFNLNIMYLKLLIPWRLF. Residues 428–474 lie on the Cytoplasmic side of the membrane; sequence RLWAMVDGIDAPENMLRCVDNNYSTVGFWRAWHTSFNKWVIRYIYVP. The chain crosses the membrane as a helical span at residues 475–495; the sequence is FGGSNNKILTSFAVFSFVAIW. Histidine 496 is an active-site residue. Over 496-502 the chain is Lumenal; the sequence is HDIQLRV. The chain crosses the membrane as a helical span at residues 503 to 523; the sequence is LFWGWLTVLLLLGETYITNCF. At 524-533 the chain is on the cytoplasmic side; that stretch reads SRYRFRSWYR. A helical transmembrane segment spans residues 534–554; sequence FVCGIGAAINICMMMIINVYG. At 555 to 575 the chain is on the lumenal side; that stretch reads FCLGAEGTKLLLKGIFNNSHS. The helical transmembrane segment at 576–596 threads the bilayer; the sequence is PEFLTAVMVSLFIAVQVMFEI. Residues 597–609 are Cytoplasmic-facing; sequence REEEKRHGINLKC.

The protein belongs to the membrane-bound acyltransferase family.

The protein localises to the endoplasmic reticulum membrane. In terms of biological role, probable membrane-bound O-acyltransferase. Together with GUP1, has an influence on the chemical composition of the yeast extracellular matrix (yECM) in yeast multicellular aggregates, such as biofilms and colonies. This is Membrane-bound O-acyltransferase GUP2 (GUP2) from Saccharomyces cerevisiae (strain ATCC 204508 / S288c) (Baker's yeast).